We begin with the raw amino-acid sequence, 462 residues long: Protoheme IX farnesyltransferase, mitochondrial (462 aa).

The N-terminal 30 residues, 1–30, are a transit peptide targeting the mitochondrion; sequence MSYFPRTYAHLMRNVLAHNKGNIYLQIGTQ. 7 helical membrane-spanning segments follow: residues 158–178, 234–254, 274–294, 298–318, 352–372, 373–393, and 425–445; these read TILVMLSAICSYALSPYPASV, LIGTLGVSILYFGVNPTVAIL, IINTWLGALVGMVPPLMGWAA, LSHPGSWCLAGLLFAWQFPHF, YSILMFPLCFGLSYFNITDWY, YQIDSGLINAWLTFWAFKFYW, and FMASVLHLPAILILAIIHKKG.

It belongs to the UbiA prenyltransferase family. Forms ~370 kDa homooligomeric complexes.

It localises to the mitochondrion. The protein resides in the mitochondrion membrane. It catalyses the reaction heme b + (2E,6E)-farnesyl diphosphate + H2O = Fe(II)-heme o + diphosphate. The protein operates within porphyrin-containing compound metabolism; heme O biosynthesis; heme O from protoheme: step 1/1. Positively regulated by the hydroxylated intermediate (heme I) formed at the subsequent step, or by HAS/COX15 itself. In terms of biological role, catalyzes the first reaction in the biosynthesis of heme A, a prosthetic group of mitochondrial cytochrome c oxidase (CcO). Heme A is synthesized from heme B by two sequential enzymatic reactions catalyzed by heme O synthase (HOS/COX10) and heme A synthase (HAS/COX15). HOS converts heme B (protoheme IX) to heme O by substitution of the vinyl group on carbon 2 of heme B porphyrin ring with a hydroxyethyl farnesyl side group. The protein is Protoheme IX farnesyltransferase, mitochondrial (COX10) of Saccharomyces cerevisiae (strain ATCC 204508 / S288c) (Baker's yeast).